Here is a 217-residue protein sequence, read N- to C-terminus: Ras-related protein Rab-19 (217 aa).

Residues Ser26, Val28, Gly29, Lys30, Thr31, Cys32, Tyr42, Thr43, Glu44, Thr45, and Thr49 each contribute to the GTP site. Thr31 contacts Mg(2+). The short motif at 39–54 (SGVYTETQQNTIGVDF) is the Switch 1 element. Mg(2+) is bound by residues Thr49 and Asp72. A Switch 2 motif is present at residues 74–89 (AGQERFRTITQSYYRS). 7 residues coordinate GTP: Gly75, Asn130, Lys131, Asp133, Ser161, Ala162, and Lys163. S-geranylgeranyl cysteine attachment occurs at residues Cys215 and Cys217. Cys217 bears the Cysteine methyl ester mark.

Belongs to the small GTPase superfamily. Rab family. Requires Mg(2+) as cofactor.

Its subcellular location is the cell membrane. It catalyses the reaction GTP + H2O = GDP + phosphate + H(+). Its activity is regulated as follows. Regulated by guanine nucleotide exchange factors (GEFs) which promote the exchange of bound GDP for free GTP. Regulated by GTPase activating proteins (GAPs) which increase the GTP hydrolysis activity. Inhibited by GDP dissociation inhibitors (GDIs). In terms of biological role, the small GTPases Rab are key regulators of intracellular membrane trafficking, from the formation of transport vesicles to their fusion with membranes. Rabs cycle between an inactive GDP-bound form and an active GTP-bound form that is able to recruit to membranes different set of downstream effectors directly responsible for vesicle formation, movement, tethering and fusion. This Homo sapiens (Human) protein is Ras-related protein Rab-19.